We begin with the raw amino-acid sequence, 759 residues long: Putative ATP-dependent DNA helicase YjcD (759 aa).

The segment at 68-121 (ACEPKPSKEGKKEDDQESGVIRLPKGKAIAADPSPAVTEWHRPRSIKPGTPFVP) is disordered. The span at 69–81 (CEPKPSKEGKKED) shows a compositional bias: basic and acidic residues. The UvrD-like helicase ATP-binding domain occupies 134–413 (VGLNTDQLKA…IYLTANYRST (280 aa)). Residues 158–163 (GSGKTR) and arginine 411 each bind ATP. The UvrD-like helicase C-terminal domain occupies 414-676 (HPIVSSADIV…QLMTIHRSKG (263 aa)).

It belongs to the helicase family. UvrD subfamily.

The protein localises to the cytoplasm. The enzyme catalyses Couples ATP hydrolysis with the unwinding of duplex DNA by translocating in the 3'-5' direction.. It catalyses the reaction ATP + H2O = ADP + phosphate + H(+). Its function is as follows. May be involved in the generation of recombinogenic substrates for the subsequent action of RecA. The sequence is that of Putative ATP-dependent DNA helicase YjcD (yjcD) from Bacillus subtilis (strain 168).